The chain runs to 238 residues: Probable transcriptional regulatory protein CT_457 (238 aa).

The interval 1–21 (MAGHSKWANTKHRKERADHKK) is disordered. Basic residues predominate over residues 9–21 (NTKHRKERADHKK).

This sequence belongs to the TACO1 family.

It is found in the cytoplasm. This Chlamydia trachomatis serovar D (strain ATCC VR-885 / DSM 19411 / UW-3/Cx) protein is Probable transcriptional regulatory protein CT_457.